The chain runs to 453 residues: Bifunctional protein GlmU (453 aa).

Residues 1–231 are pyrophosphorylase; sequence MERTCLAVIL…EIEMTGCNTR (231 aa). UDP-N-acetyl-alpha-D-glucosamine is bound by residues 10–13, lysine 24, glutamine 77, 82–83, 105–107, glycine 143, glutamate 157, asparagine 172, and asparagine 229; these read LAAG, GT, and YGD. Aspartate 107 is a Mg(2+) binding site. Position 229 (asparagine 229) interacts with Mg(2+). The linker stretch occupies residues 232–252; the sequence is AELAVIERFWQERRRHQLMLS. Residues 253–453 form an N-acetyltransferase region; it reads GVTMIAPETV…ATKAAKKAKG (201 aa). UDP-N-acetyl-alpha-D-glucosamine-binding residues include arginine 318 and lysine 336. Histidine 348 (proton acceptor) is an active-site residue. UDP-N-acetyl-alpha-D-glucosamine-binding residues include tyrosine 351 and asparagine 362. Acetyl-CoA-binding positions include alanine 365, 371–372, serine 390, serine 408, and arginine 425; that span reads NY.

It in the N-terminal section; belongs to the N-acetylglucosamine-1-phosphate uridyltransferase family. The protein in the C-terminal section; belongs to the transferase hexapeptide repeat family. Homotrimer. The cofactor is Mg(2+).

It localises to the cytoplasm. The catalysed reaction is alpha-D-glucosamine 1-phosphate + acetyl-CoA = N-acetyl-alpha-D-glucosamine 1-phosphate + CoA + H(+). It catalyses the reaction N-acetyl-alpha-D-glucosamine 1-phosphate + UTP + H(+) = UDP-N-acetyl-alpha-D-glucosamine + diphosphate. It functions in the pathway nucleotide-sugar biosynthesis; UDP-N-acetyl-alpha-D-glucosamine biosynthesis; N-acetyl-alpha-D-glucosamine 1-phosphate from alpha-D-glucosamine 6-phosphate (route II): step 2/2. It participates in nucleotide-sugar biosynthesis; UDP-N-acetyl-alpha-D-glucosamine biosynthesis; UDP-N-acetyl-alpha-D-glucosamine from N-acetyl-alpha-D-glucosamine 1-phosphate: step 1/1. Its pathway is bacterial outer membrane biogenesis; LPS lipid A biosynthesis. In terms of biological role, catalyzes the last two sequential reactions in the de novo biosynthetic pathway for UDP-N-acetylglucosamine (UDP-GlcNAc). The C-terminal domain catalyzes the transfer of acetyl group from acetyl coenzyme A to glucosamine-1-phosphate (GlcN-1-P) to produce N-acetylglucosamine-1-phosphate (GlcNAc-1-P), which is converted into UDP-GlcNAc by the transfer of uridine 5-monophosphate (from uridine 5-triphosphate), a reaction catalyzed by the N-terminal domain. The polypeptide is Bifunctional protein GlmU (Rhizobium leguminosarum bv. trifolii (strain WSM2304)).